A 308-amino-acid chain; its full sequence is Lipoyl synthase (308 aa).

[4Fe-4S] cluster is bound by residues cysteine 48, cysteine 53, cysteine 59, cysteine 74, cysteine 78, cysteine 81, and serine 287. Residues tryptophan 60–phenylalanine 277 form the Radical SAM core domain.

This sequence belongs to the radical SAM superfamily. Lipoyl synthase family. It depends on [4Fe-4S] cluster as a cofactor.

It localises to the cytoplasm. The catalysed reaction is [[Fe-S] cluster scaffold protein carrying a second [4Fe-4S](2+) cluster] + N(6)-octanoyl-L-lysyl-[protein] + 2 oxidized [2Fe-2S]-[ferredoxin] + 2 S-adenosyl-L-methionine + 4 H(+) = [[Fe-S] cluster scaffold protein] + N(6)-[(R)-dihydrolipoyl]-L-lysyl-[protein] + 4 Fe(3+) + 2 hydrogen sulfide + 2 5'-deoxyadenosine + 2 L-methionine + 2 reduced [2Fe-2S]-[ferredoxin]. It functions in the pathway protein modification; protein lipoylation via endogenous pathway; protein N(6)-(lipoyl)lysine from octanoyl-[acyl-carrier-protein]: step 2/2. Catalyzes the radical-mediated insertion of two sulfur atoms into the C-6 and C-8 positions of the octanoyl moiety bound to the lipoyl domains of lipoate-dependent enzymes, thereby converting the octanoylated domains into lipoylated derivatives. The sequence is that of Lipoyl synthase from Chlamydia muridarum (strain MoPn / Nigg).